The sequence spans 98 residues: snRNA-activating protein complex subunit 5 (98 aa).

Residues Q73–S82 show a composition bias toward polar residues. Positions Q73 to S98 are disordered. T85 bears the Phosphothreonine mark. The span at E86 to S98 shows a compositional bias: acidic residues.

Part of the SNAPc complex composed of 5 subunits: SNAPC1, SNAPC2, SNAPC3, SNAPC4 and SNAPC5. SNAPC5 interacts with SNAPC4.

The protein resides in the nucleus. Its function is as follows. Part of the SNAPc complex required for the transcription of both RNA polymerase II and III small-nuclear RNA genes. Binds to the proximal sequence element (PSE), a non-TATA-box basal promoter element common to these 2 types of genes. Recruits TBP and BRF2 to the U6 snRNA TATA box. In Homo sapiens (Human), this protein is snRNA-activating protein complex subunit 5 (SNAPC5).